The primary structure comprises 334 residues: Formamidase (334 aa).

Positions 14 to 260 (FLVAAIQFPV…WEIVTGEIYP (247 aa)) constitute a CN hydrolase domain. The Proton acceptor role is filled by E60. K133 functions as the Proton donor in the catalytic mechanism. The active-site Nucleophile is C166.

Belongs to the carbon-nitrogen hydrolase superfamily. Aliphatic amidase family.

It catalyses the reaction formamide + H2O = formate + NH4(+). Is an aliphatic amidase with a restricted substrate specificity, as it only hydrolyzes formamide. The chain is Formamidase from Helicobacter pylori (strain Shi470).